The primary structure comprises 103 residues: UPF0235 protein RHECIAT_CH0004196 (103 aa).

This sequence belongs to the UPF0235 family.

The polypeptide is UPF0235 protein RHECIAT_CH0004196 (Rhizobium etli (strain CIAT 652)).